We begin with the raw amino-acid sequence, 122 residues long: Large ribosomal subunit protein uL14c (122 aa).

The protein belongs to the universal ribosomal protein uL14 family. Part of the 50S ribosomal subunit.

The protein resides in the plastid. It is found in the chloroplast. Functionally, binds to 23S rRNA. The polypeptide is Large ribosomal subunit protein uL14c (Amborella trichopoda).